The primary structure comprises 116 residues: Iron-sulfur cluster insertion protein ErpA (116 aa).

Iron-sulfur cluster is bound by residues cysteine 44, cysteine 108, and cysteine 110.

Belongs to the HesB/IscA family. As to quaternary structure, homodimer. It depends on iron-sulfur cluster as a cofactor.

In terms of biological role, required for insertion of 4Fe-4S clusters for at least IspG. In Shewanella loihica (strain ATCC BAA-1088 / PV-4), this protein is Iron-sulfur cluster insertion protein ErpA.